The chain runs to 126 residues: Histone H2B type 1-H (126 aa).

Residues 1–12 (MPDPAKSAPAPK) show a composition bias toward low complexity. A disordered region spans residues 1-36 (MPDPAKSAPAPKKGSKKAVTKAQKKDGKKRKRSRKE). Proline 2 carries the N-acetylproline modification. Lysine 6 bears the N6-(2-hydroxyisobutyryl)lysine; alternate mark. At lysine 6 the chain carries N6-(beta-hydroxybutyryl)lysine; alternate. Lysine 6 is subject to N6-acetyllysine; alternate. Lysine 6 bears the N6-butyryllysine; alternate mark. Lysine 6 carries the N6-crotonyllysine; alternate modification. The residue at position 6 (lysine 6) is an N6-lactoyllysine; alternate. A Glycyl lysine isopeptide (Lys-Gly) (interchain with G-Cter in SUMO2); alternate cross-link involves residue lysine 6. Serine 7 carries the post-translational modification ADP-ribosylserine. Lysine 12 bears the N6-(beta-hydroxybutyryl)lysine; alternate mark. N6-acetyllysine; alternate is present on residues lysine 12 and lysine 13. Residues lysine 12 and lysine 13 each carry the N6-crotonyllysine; alternate modification. Residue lysine 12 is modified to N6-lactoyllysine; alternate. N6-(2-hydroxyisobutyryl)lysine; alternate is present on lysine 13. Serine 15 bears the Phosphoserine; by STK4/MST1 mark. N6-acetyllysine; alternate is present on residues lysine 16, lysine 17, lysine 21, and lysine 24. An N6-crotonyllysine; alternate mark is found at lysine 16, lysine 17, lysine 21, and lysine 24. Residues lysine 16, lysine 17, lysine 21, and lysine 24 each carry the N6-lactoyllysine; alternate modification. 2 positions are modified to N6-(beta-hydroxybutyryl)lysine; alternate: lysine 17 and lysine 21. Lysine 17 carries the N6-glutaryllysine; alternate modification. 2 positions are modified to N6-(2-hydroxyisobutyryl)lysine; alternate: lysine 21 and lysine 24. Position 21 is an N6-butyryllysine; alternate (lysine 21). A Glycyl lysine isopeptide (Lys-Gly) (interchain with G-Cter in SUMO2); alternate cross-link involves residue lysine 21. Lysine 25 carries the N6-(2-hydroxyisobutyryl)lysine modification. An N6-(2-hydroxyisobutyryl)lysine; alternate modification is found at lysine 35. Lysine 35 is modified (N6-(beta-hydroxybutyryl)lysine; alternate). Residue lysine 35 is modified to N6-crotonyllysine; alternate. At lysine 35 the chain carries N6-glutaryllysine; alternate. At lysine 35 the chain carries N6-succinyllysine; alternate. Residue lysine 35 forms a Glycyl lysine isopeptide (Lys-Gly) (interchain with G-Cter in ubiquitin); alternate linkage. PolyADP-ribosyl glutamic acid is present on glutamate 36. Serine 37 carries the post-translational modification Phosphoserine; by AMPK. N6-(2-hydroxyisobutyryl)lysine; alternate occurs at positions 44, 47, and 58. Lysine 44 is subject to N6-lactoyllysine; alternate. Residues lysine 44 and lysine 47 each carry the N6-glutaryllysine; alternate modification. Residue lysine 47 is modified to N6-methyllysine; alternate. Lysine 58 carries the post-translational modification N6,N6-dimethyllysine; alternate. Arginine 80 is subject to Dimethylated arginine. Lysine 86 is subject to N6-(2-hydroxyisobutyryl)lysine; alternate. At lysine 86 the chain carries N6-(beta-hydroxybutyryl)lysine; alternate. Residue lysine 86 is modified to N6-acetyllysine; alternate. An N6-lactoyllysine; alternate modification is found at lysine 86. Position 86 is an N6,N6,N6-trimethyllysine; alternate (lysine 86). Omega-N-methylarginine occurs at positions 87 and 93. Lysine 109 is subject to N6-(2-hydroxyisobutyryl)lysine; alternate. Residue lysine 109 is modified to N6-lactoyllysine; alternate. Lysine 109 bears the N6-glutaryllysine; alternate mark. At lysine 109 the chain carries N6-methyllysine; alternate. The O-linked (GlcNAc) serine glycan is linked to serine 113. At threonine 116 the chain carries Phosphothreonine. 2 positions are modified to N6-(2-hydroxyisobutyryl)lysine; alternate: lysine 117 and lysine 121. N6-(beta-hydroxybutyryl)lysine; alternate is present on residues lysine 117 and lysine 121. Lysine 117 and lysine 121 each carry N6-lactoyllysine; alternate. N6-glutaryllysine; alternate occurs at positions 117 and 121. Residues lysine 117 and lysine 121 each carry the N6-succinyllysine; alternate modification. N6-malonyllysine; alternate is present on lysine 117. The residue at position 117 (lysine 117) is an N6-methylated lysine; alternate. Residue lysine 121 forms a Glycyl lysine isopeptide (Lys-Gly) (interchain with G-Cter in ubiquitin); alternate linkage.

Belongs to the histone H2B family. As to quaternary structure, the nucleosome is a histone octamer containing two molecules each of H2A, H2B, H3 and H4 assembled in one H3-H4 heterotetramer and two H2A-H2B heterodimers. The octamer wraps approximately 147 bp of DNA. Found in a complex with PPAR9; DTX3L AND STAT1; the interaction is likely to induce DTX3L-mediated ubiquitination of H2BC9/H2BJ. Monoubiquitination at Lys-35 (H2BK34Ub) by the MSL1/MSL2 dimer is required for histone H3 'Lys-4' (H3K4me) and 'Lys-79' (H3K79me) methylation and transcription activation at specific gene loci, such as HOXA9 and MEIS1 loci. Similarly, monoubiquitination at Lys-121 (H2BK120Ub) by the RNF20/40 complex gives a specific tag for epigenetic transcriptional activation and is also prerequisite for histone H3 'Lys-4' and 'Lys-79' methylation. It also functions cooperatively with the FACT dimer to stimulate elongation by RNA polymerase II. H2BK120Ub also acts as a regulator of mRNA splicing: deubiquitination by USP49 is required for efficient cotranscriptional splicing of a large set of exons. Monoubiquitinated by DTX3L upon encephalomyocarditis virus (EMCV)-mediated infection. Post-translationally, phosphorylation at Ser-37 (H2BS36ph) by AMPK in response to stress promotes transcription. Phosphorylated on Ser-15 (H2BS14ph) by STK4/MST1 during apoptosis; which facilitates apoptotic chromatin condensation. Also phosphorylated on Ser-15 in response to DNA double strand breaks (DSBs), and in correlation with somatic hypermutation and immunoglobulin class-switch recombination. In terms of processing, glcNAcylation at Ser-113 promotes monoubiquitination of Lys-121. It fluctuates in response to extracellular glucose, and associates with transcribed genes. ADP-ribosylated by PARP1 or PARP2 on Ser-7 (H2BS6ADPr) in response to DNA damage. H2BS6ADPr promotes recruitment of CHD1L. Poly ADP-ribosylation on Glu-36 (H2BE35ADPr) by PARP1 regulates adipogenesis: it inhibits phosphorylation at Ser-37 (H2BS36ph), thereby blocking expression of pro-adipogenetic genes. Post-translationally, crotonylation (Kcr) is specifically present in male germ cells and marks testis-specific genes in post-meiotic cells, including X-linked genes that escape sex chromosome inactivation in haploid cells. Crotonylation marks active promoters and enhancers and confers resistance to transcriptional repressors. It is also associated with post-meiotically activated genes on autosomes. In terms of processing, lactylated in macrophages by EP300/P300 by using lactoyl-CoA directly derived from endogenous or exogenous lactate, leading to stimulates gene transcription.

The protein resides in the nucleus. Its subcellular location is the chromosome. In terms of biological role, core component of nucleosome. Nucleosomes wrap and compact DNA into chromatin, limiting DNA accessibility to the cellular machineries which require DNA as a template. Histones thereby play a central role in transcription regulation, DNA repair, DNA replication and chromosomal stability. DNA accessibility is regulated via a complex set of post-translational modifications of histones, also called histone code, and nucleosome remodeling. The protein is Histone H2B type 1-H of Homo sapiens (Human).